The sequence spans 156 residues: Large ribosomal subunit protein uL22 (156 aa).

This sequence belongs to the universal ribosomal protein uL22 family. Part of the 50S ribosomal subunit.

In terms of biological role, this protein binds specifically to 23S rRNA. It makes multiple contacts with different domains of the 23S rRNA in the assembled 50S subunit and ribosome. Functionally, the globular domain of the protein is located near the polypeptide exit tunnel on the outside of the subunit, while an extended beta-hairpin is found that lines the wall of the exit tunnel in the center of the 70S ribosome. The protein is Large ribosomal subunit protein uL22 of Aeropyrum pernix (strain ATCC 700893 / DSM 11879 / JCM 9820 / NBRC 100138 / K1).